A 459-amino-acid chain; its full sequence is Putrescine aminotransferase (459 aa).

Pyridoxal 5'-phosphate is bound by residues 150-151 (GT) and Gln274. Position 300 is an N6-(pyridoxal phosphate)lysine (Lys300). Residue Thr332 participates in pyridoxal 5'-phosphate binding.

The protein belongs to the class-III pyridoxal-phosphate-dependent aminotransferase family. Putrescine aminotransferase subfamily. The cofactor is pyridoxal 5'-phosphate.

It carries out the reaction an alkane-alpha,omega-diamine + 2-oxoglutarate = an omega-aminoaldehyde + L-glutamate. It catalyses the reaction putrescine + 2-oxoglutarate = 1-pyrroline + L-glutamate + H2O. The catalysed reaction is cadaverine + 2-oxoglutarate = 5-aminopentanal + L-glutamate. Its pathway is amine and polyamine degradation; putrescine degradation; 4-aminobutanal from putrescine (transaminase route): step 1/1. In terms of biological role, catalyzes the aminotransferase reaction from putrescine to 2-oxoglutarate, leading to glutamate and 4-aminobutanal, which spontaneously cyclizes to form 1-pyrroline. This is the first step in one of two pathways for putrescine degradation, where putrescine is converted into 4-aminobutanoate (gamma-aminobutyrate or GABA) via 4-aminobutanal. Also functions as a cadaverine transaminase in a a L-lysine degradation pathway to succinate that proceeds via cadaverine, glutarate and L-2-hydroxyglutarate. In Escherichia coli O6:K15:H31 (strain 536 / UPEC), this protein is Putrescine aminotransferase.